A 1035-amino-acid polypeptide reads, in one-letter code: Unconventional myosin IC (1035 aa).

The Myosin motor domain maps to 21–703 (GVQDFVLLEN…TLFDTEDAYQ (683 aa)). 114 to 121 (GESGSGKT) is an ATP binding site. Phosphoserine is present on Ser-304. The residue at position 310 (Thr-310) is a Phosphothreonine. The actin-binding stretch occupies residues 578 to 600 (LNNLMDILMCKEPSYIRCIKPND). IQ domains follow at residues 696–728 (FDTEDAYQEKKHEIAAIIQAHWKGLMQRRKYLK), 729–751 (LRAQVIIMQSYCRRKLAQQAAKK), and 752–779 (RREAADKIRAFIKGFITRNDAPNGFNEE). The TH1 domain maps to 857–1035 (KNNYASSVST…KGHLVIIGTQ (179 aa)).

This sequence belongs to the TRAFAC class myosin-kinesin ATPase superfamily. Myosin family. In terms of assembly, binds F-actin. In the embryo, expressed in gastric caeca, midgut cells of the proventriculus, and in the mid and hindgut. In the larval and adult gut brush border, expressed in the microvilli. Also expressed at high levels in follicle cells during oogenesis.

The protein resides in the cytoplasm. It localises to the cell cortex. The protein localises to the cell membrane. Functionally, unconventional myosin that functions as actin-based motor protein with ATPase activity. Binds to membranes enriched in phosphatidylinositol 4-5-bisphosphate, and can glide along actin filaments when anchored to a lipid bilayer. Functions as antagonist for Myo31DF, an unconventional myosin with an essential role in the establishment of body left-right asymmetry. This chain is Unconventional myosin IC (Myo61F), found in Drosophila melanogaster (Fruit fly).